The following is a 405-amino-acid chain: Tryptophan synthase beta chain (405 aa).

Lys95 carries the N6-(pyridoxal phosphate)lysine modification.

It belongs to the TrpB family. Tetramer of two alpha and two beta chains. The cofactor is pyridoxal 5'-phosphate.

It carries out the reaction (1S,2R)-1-C-(indol-3-yl)glycerol 3-phosphate + L-serine = D-glyceraldehyde 3-phosphate + L-tryptophan + H2O. Its pathway is amino-acid biosynthesis; L-tryptophan biosynthesis; L-tryptophan from chorismate: step 5/5. The beta subunit is responsible for the synthesis of L-tryptophan from indole and L-serine. The sequence is that of Tryptophan synthase beta chain from Pseudomonas putida (strain W619).